The primary structure comprises 509 residues: Putative (R)-citramalate synthase CimA (509 aa).

In terms of domain architecture, Pyruvate carboxyltransferase spans 14–267; it reads VRIFDTTLRD…DTGIRTERLT (254 aa).

Belongs to the alpha-IPM synthase/homocitrate synthase family. Homodimer.

The enzyme catalyses pyruvate + acetyl-CoA + H2O = (3R)-citramalate + CoA + H(+). It participates in amino-acid biosynthesis; L-isoleucine biosynthesis; 2-oxobutanoate from pyruvate: step 1/3. In terms of biological role, catalyzes the condensation of pyruvate and acetyl-coenzyme A to form (R)-citramalate. The protein is Putative (R)-citramalate synthase CimA (cimA) of Methanopyrus kandleri (strain AV19 / DSM 6324 / JCM 9639 / NBRC 100938).